A 327-amino-acid chain; its full sequence is Type II methyltransferase M.HhaI (327 aa).

The SAM-dependent MTase C5-type domain maps to 12–325 (LRFIDLFAGL…YNIGSSLNFK (314 aa)). The active site involves cysteine 81.

The protein belongs to the class I-like SAM-binding methyltransferase superfamily. C5-methyltransferase family. In terms of assembly, monomer.

It carries out the reaction a 2'-deoxycytidine in DNA + S-adenosyl-L-methionine = a 5-methyl-2'-deoxycytidine in DNA + S-adenosyl-L-homocysteine + H(+). In terms of biological role, a methylase, recognizes the double-stranded sequence 5'-GCGC-3', methylates C-2 on both strands, and protects the DNA from cleavage by the HhaI endonuclease. This chain is Type II methyltransferase M.HhaI (hhaIM), found in Haemophilus parahaemolyticus.